We begin with the raw amino-acid sequence, 156 residues long: Arginine repressor (156 aa).

This sequence belongs to the ArgR family.

It localises to the cytoplasm. It participates in amino-acid biosynthesis; L-arginine biosynthesis [regulation]. In terms of biological role, regulates arginine biosynthesis genes. In Edwardsiella ictaluri (strain 93-146), this protein is Arginine repressor.